A 112-amino-acid chain; its full sequence is T cell receptor alpha variable 21 (112 aa).

The signal sequence occupies residues 1–19 (METLLGLLILWLQLQWVSS). Positions 21–112 (QEVTQIPAAL…DSATYLCAVR (92 aa)) constitute an Ig-like domain. N-linked (GlcNAc...) asparagine glycosylation is found at Asn41 and Asn82. Cys42 and Cys109 are disulfide-bonded.

In terms of assembly, alpha-beta TR is a heterodimer composed of an alpha and beta chain; disulfide-linked. The alpha-beta TR is associated with the transmembrane signaling CD3 coreceptor proteins to form the TR-CD3 (TcR or TCR). The assembly of alpha-beta TR heterodimers with CD3 occurs in the endoplasmic reticulum where a single alpha-beta TR heterodimer associates with one CD3D-CD3E heterodimer, one CD3G-CD3E heterodimer and one CD247 homodimer forming a stable octameric structure. CD3D-CD3E and CD3G-CD3E heterodimers preferentially associate with TR alpha and TR beta chains, respectively. The association of the CD247 homodimer is the last step of TcR assembly in the endoplasmic reticulum and is required for transport to the cell surface.

It localises to the cell membrane. Functionally, v region of the variable domain of T cell receptor (TR) alpha chain that participates in the antigen recognition. Alpha-beta T cell receptors are antigen specific receptors which are essential to the immune response and are present on the cell surface of T lymphocytes. Recognize peptide-major histocompatibility (MH) (pMH) complexes that are displayed by antigen presenting cells (APC), a prerequisite for efficient T cell adaptive immunity against pathogens. Binding of alpha-beta TR to pMH complex initiates TR-CD3 clustering on the cell surface and intracellular activation of LCK that phosphorylates the ITAM motifs of CD3G, CD3D, CD3E and CD247 enabling the recruitment of ZAP70. In turn ZAP70 phosphorylates LAT, which recruits numerous signaling molecules to form the LAT signalosome. The LAT signalosome propagates signal branching to three major signaling pathways, the calcium, the mitogen-activated protein kinase (MAPK) kinase and the nuclear factor NF-kappa-B (NF-kB) pathways, leading to the mobilization of transcription factors that are critical for gene expression and essential for T cell growth and differentiation. The T cell repertoire is generated in the thymus, by V-(D)-J rearrangement. This repertoire is then shaped by intrathymic selection events to generate a peripheral T cell pool of self-MH restricted, non-autoaggressive T cells. Post-thymic interaction of alpha-beta TR with the pMH complexes shapes TR structural and functional avidity. This Homo sapiens (Human) protein is T cell receptor alpha variable 21.